Reading from the N-terminus, the 184-residue chain is Transposon Tn917 resolvase (184 aa).

A Resolvase/invertase-type recombinase catalytic domain is found at 1 to 134 (MIFGYARVST…SGLKAARVRG (134 aa)). The active-site O-(5'-phospho-DNA)-serine intermediate is Ser-9. Residues 161-180 (IRQILDASKLSKTTFYRYLN) constitute a DNA-binding region (H-T-H motif).

Belongs to the site-specific recombinase resolvase family.

Functionally, resolvase catalyzes the resolution (a site-specific recombination) of the cointegrated replicon to yield the final transposition products. The polypeptide is Transposon Tn917 resolvase (tnpR) (Enterococcus faecalis (Streptococcus faecalis)).